Reading from the N-terminus, the 243-residue chain is Bidirectional sugar transporter SWEET2a (243 aa).

Residues 1–23 (MDWAAPALTSFVADSSYRHLCCY) are Extracellular-facing. Residues 24–44 (GAGIAGNVFAFVLFISPLPTF) form a helical membrane-spanning segment. The MtN3/slv 1 domain maps to 24–111 (GAGIAGNVFA…AVFIAFADAK (88 aa)). At 45 to 57 (KRIVRNGSTEQFS) the chain is on the cytoplasmic side. Residues 58–80 (AMPYIYSLLNCLICMWYGLPFVS) traverse the membrane as a helical segment. Residues 81-89 (YGVVLVATV) are Extracellular-facing. Residues 90–110 (NSIGAVFQLAYTAVFIAFADA) traverse the membrane as a helical segment. At 111 to 117 (KQRLKVS) the chain is on the cytoplasmic side. A helical membrane pass occupies residues 118–138 (ALLAAVFVVFGLIVFVSLALL). Residues 139–145 (DHPTRQM) are Extracellular-facing. A helical membrane pass occupies residues 146 to 166 (FVGYLSVASLIFMFASPLSII). In terms of domain architecture, MtN3/slv 2 spans 147–230 (VGYLSVASLI…VLYAYFRKGS (84 aa)). Topologically, residues 167 to 179 (NLVIRTKSVEYMP) are cytoplasmic. Residues 180 to 200 (FYLSLSMFLMSASFFGYGVLL) form a helical membrane-spanning segment. At 201–202 (ND) the chain is on the extracellular side. A helical transmembrane segment spans residues 203 to 223 (FFIYIPNGIGTILGIIQLVLY). The Cytoplasmic segment spans residues 224–243 (AYFRKGSSEEAKLPLLVTHT).

This sequence belongs to the SWEET sugar transporter family. In terms of assembly, forms homooligomers and/or heterooligomers.

It localises to the cell membrane. Mediates both low-affinity uptake and efflux of sugar across the plasma membrane. The chain is Bidirectional sugar transporter SWEET2a from Sorghum bicolor (Sorghum).